The following is a 248-amino-acid chain: MVANSKESETLTGASAVTGLPQKRFYRQRAHSNPIADHSFNYPARPEDVDWRSLYPSMGDDQQVQFADIGCGYGGFLVTLGEMFPEKLAIGMEIRVKVSDYVIDRIAALRLKNANEATTYQNIACIRTNAMKYLPNYFQKSQLEKMFFLYPDPHFKRAKHKWRIINQALLSEYAYVLRKGGLVYTMTDVEDLHTWIVSHMTQHPLFERLSDEEANADPITPKLYQSSEEGAKVVRNKGEHFLAIFRRI.

Residues Gly70, 93 to 94 (EI), 129 to 130 (NA), and Leu149 each bind S-adenosyl-L-methionine. Residue Asp152 is part of the active site. 227–229 (SEE) lines the S-adenosyl-L-methionine pocket.

This sequence belongs to the class I-like SAM-binding methyltransferase superfamily. TrmB family.

The protein resides in the nucleus. The enzyme catalyses guanosine(46) in tRNA + S-adenosyl-L-methionine = N(7)-methylguanosine(46) in tRNA + S-adenosyl-L-homocysteine. Its pathway is tRNA modification; N(7)-methylguanine-tRNA biosynthesis. Catalyzes the formation of N(7)-methylguanine at position 46 (m7G46) in tRNA. The chain is tRNA (guanine-N(7)-)-methyltransferase from Drosophila mojavensis (Fruit fly).